The following is a 94-amino-acid chain: Viral macrophage inflammatory protein 2 (94 aa).

Positions 1-20 (MDTKGILLVAVLTALLCLQS) are cleaved as a signal peptide. Disulfide bonds link cysteine 34–cysteine 58 and cysteine 35–cysteine 74.

This sequence belongs to the intercrine beta (chemokine CC) family. Monomer. Interacts with human chemokine receptor CXCR4.

Its subcellular location is the secreted. Blocks infection by several different human immunodeficiency virus type 1 (HIV-1) strains. This occurs because vMIP-II binds to a wide range of chemokine receptors. May form part of the response to host defenses contributing to virus-induced neoplasia and may have relevance to KSHV and HIV-I interactions. This chain is Viral macrophage inflammatory protein 2 (ORF K4), found in Human herpesvirus 8 type P (isolate GK18) (HHV-8).